The primary structure comprises 359 residues: Phospho-N-acetylmuramoyl-pentapeptide-transferase (359 aa).

10 helical membrane passes run 23 to 43 (VAFF…IKWA), 68 to 88 (MGGI…GNLF), 92 to 112 (VLLG…DDYM), 126 to 146 (MKFF…LYIG), 165 to 185 (AFKI…VFLA), 198 to 218 (GLAT…VYVA), 235 to 255 (SGEL…FLWY), 262 to 282 (VFMG…MAIV), 287 to 307 (ILLL…ILQV), and 336 to 356 (KIIV…LLSL).

This sequence belongs to the glycosyltransferase 4 family. MraY subfamily. It depends on Mg(2+) as a cofactor.

The protein localises to the cell inner membrane. It carries out the reaction UDP-N-acetyl-alpha-D-muramoyl-L-alanyl-gamma-D-glutamyl-meso-2,6-diaminopimeloyl-D-alanyl-D-alanine + di-trans,octa-cis-undecaprenyl phosphate = di-trans,octa-cis-undecaprenyl diphospho-N-acetyl-alpha-D-muramoyl-L-alanyl-D-glutamyl-meso-2,6-diaminopimeloyl-D-alanyl-D-alanine + UMP. It participates in cell wall biogenesis; peptidoglycan biosynthesis. In terms of biological role, catalyzes the initial step of the lipid cycle reactions in the biosynthesis of the cell wall peptidoglycan: transfers peptidoglycan precursor phospho-MurNAc-pentapeptide from UDP-MurNAc-pentapeptide onto the lipid carrier undecaprenyl phosphate, yielding undecaprenyl-pyrophosphoryl-MurNAc-pentapeptide, known as lipid I. In Helicobacter hepaticus (strain ATCC 51449 / 3B1), this protein is Phospho-N-acetylmuramoyl-pentapeptide-transferase.